Consider the following 461-residue polypeptide: Glutamate-gated chloride channel alpha (461 aa).

The signal sequence occupies residues methionine 1 to alanine 20. The Extracellular segment spans residues glutamine 21 to serine 275. Arginine 98, arginine 117, and serine 182 together coordinate L-glutamate. Cysteine 191 and cysteine 205 are disulfide-bonded. Serine 211 serves as a coordination point for L-glutamate. Asparagine 246 is a glycosylation site (N-linked (GlcNAc...) asparagine). An intrachain disulfide couples cysteine 252 to cysteine 263. The helical transmembrane segment at phenylalanine 276–phenylalanine 298 threads the bilayer. The Cytoplasmic portion of the chain corresponds to aspartate 299–isoleucine 303. A helical transmembrane segment spans residues proline 304–asparagine 325. At serine 326–serine 332 the chain is on the extracellular side. A helical membrane pass occupies residues tyrosine 333 to leucine 353. Over glutamate 354–aspartate 432 the chain is Cytoplasmic. The helical transmembrane segment at leucine 433–phenylalanine 454 threads the bilayer. The Extracellular portion of the chain corresponds to glycine 455–phenylalanine 461.

Belongs to the ligand-gated ion channel (TC 1.A.9) family. Glutamate-gated chloride channel (TC 1.A.9.4) subfamily. In terms of assembly, pentamer. Homooligomer, forms functional heterooligomers with glc-2.

The protein resides in the postsynaptic cell membrane. Its subcellular location is the cell membrane. Its function is as follows. Glutamate-gated chloride channel subunit; channel properties depend on the subunit composition. Glutamate binding triggers a rapidly reversible current in heteromeric channels formed by glc-1 and glc-2, while the anti-helmintic drug ivermectin and other avermectins trigger a permanently open channel configuration. Channels containing only glc-1 are activated by ivermectin, but not by glutamate alone (in vitro). The heteromeric channel formed by glc-1 and glc-2 is also activated by ibotenate, and it is blocked by picrotoxin and flufenamic acid. Plays a role in the regulation of locomotor behavior. The polypeptide is Glutamate-gated chloride channel alpha (Caenorhabditis elegans).